The primary structure comprises 335 residues: Nucleoid-associated protein KPK_1538 (335 aa).

Belongs to the YejK family.

Its subcellular location is the cytoplasm. The protein localises to the nucleoid. This is Nucleoid-associated protein KPK_1538 from Klebsiella pneumoniae (strain 342).